The primary structure comprises 1678 residues: Nuclear pore complex protein Nup98-Nup96 (1678 aa).

Low complexity predominate over residues 1 to 11 (MFGQNKSFGSS). 5 disordered regions span residues 1–41 (MFGQ…QPAN), 68–100 (SSIF…FGST), 301–366 (TTGS…GAPA), 441–473 (FGNT…TQAT), and 603–631 (SKEA…RSVH). Positions 12-22 (SFGGGSSGSGL) are enriched in gly residues. Composition is skewed to low complexity over residues 23-38 (FGQN…LFGQ) and 73-83 (SPQQPQNNQSS). Polar residues predominate over residues 306–329 (LFGNQQPQTNTGGSLFGNTQNQNQ). The span at 345–366 (FGQAQQQPQQQSSGFSFGGAPA) shows a compositional bias: low complexity. Polar residues-rich tracts occupy residues 456–473 (SQPQ…TQAT) and 615–628 (RNST…LTNR). The 143-residue stretch at 777-919 (KPDYFSLPTI…GSWVFRVDHF (143 aa)) folds into the Peptidase S59 domain. The active-site Nucleophile is the S920.

This sequence belongs to the nucleoporin GLFG family. As to quaternary structure, part of the NPC. In terms of processing, the Nup98 and Nup96 chains are autoproteolytically processed from a single precursor protein.

Its subcellular location is the cytoplasmic granule. The protein resides in the nucleus membrane. It localises to the nucleus. The protein localises to the nuclear pore complex. It is found in the nucleus envelope. Its subcellular location is the chromosome. Functionally, nup98 and Nup96 play a role in the bidirectional transport across the nucleoporin complex (NPC). Required for the nuclear import of hcp-4 during mitotic prophase, this step is essential for centrosome assembly and resolution. Regulates nucleoporin npp-5 localization to the nuclear membrane during interphase and to kinetochores during metaphase. Has a role in P granule integrity; may promote the 'liquid phase' of P granules by increasing the number of interacting RNA-protein complexes. Binds nos-2 mRNA, probably indirectly, and promotes its accumulation in P granules. The chain is Nuclear pore complex protein Nup98-Nup96 from Caenorhabditis elegans.